A 444-amino-acid polypeptide reads, in one-letter code: Chromosomal replication initiator protein DnaA (444 aa).

The tract at residues 1–73 (MDSSAQQLWH…AEVVQDIVGY (73 aa)) is domain I, interacts with DnaA modulators. Residues 73–104 (YPVEIQLTAQQGDLIAIFQPHTSLESELSPTN) form a domain II region. Residues 105-321 (QLNPKYNFSR…GALIRATTYI (217 aa)) are domain III, AAA+ region. ATP is bound by residues glycine 149, glycine 151, lysine 152, and threonine 153. Residues 322 to 444 (SISGLPMTVE…ERINSLSRNQ (123 aa)) form a domain IV, binds dsDNA region.

It belongs to the DnaA family. In terms of assembly, oligomerizes as a right-handed, spiral filament on DNA at oriC.

The protein localises to the cytoplasm. Its function is as follows. Plays an essential role in the initiation and regulation of chromosomal replication. ATP-DnaA binds to the origin of replication (oriC) to initiate formation of the DNA replication initiation complex once per cell cycle. Binds the DnaA box (a 9 base pair repeat at the origin) and separates the double-stranded (ds)DNA. Forms a right-handed helical filament on oriC DNA; dsDNA binds to the exterior of the filament while single-stranded (ss)DNA is stabiized in the filament's interior. The ATP-DnaA-oriC complex binds and stabilizes one strand of the AT-rich DNA unwinding element (DUE), permitting loading of DNA polymerase. After initiation quickly degrades to an ADP-DnaA complex that is not apt for DNA replication. Binds acidic phospholipids. The sequence is that of Chromosomal replication initiator protein DnaA from Microcystis aeruginosa (strain NIES-843 / IAM M-2473).